The following is a 1166-amino-acid chain: Poly [ADP-ribose] polymerase tankyrase-2 (1166 aa).

ANK repeat units lie at residues 23–52 (PSAR…VNSR), 57–86 (RKST…NVQA), 90–119 (GGLI…DPNA), and 123–152 (WNYT…EPTI). The residue at position 203 (N203) is a (3S)-3-hydroxyasparagine; by HIF1AN. ANK repeat units follow at residues 210-239 (RKST…DVHA), 243-272 (GDLV…CVNA), 276-305 (WQFT…DPTL), 363-395 (THET…NTNE), 399-428 (EFLT…KVNA), 432-461 (LGQT…DPNI), and 463-489 (SLQG…SLGH). The residue at position 238 (H238) is a (3S)-3-hydroxyhistidine; by HIF1AN. Position 271 is a (3S)-3-hydroxyasparagine; by HIF1AN (N271). N427 is modified ((3S)-3-hydroxyasparagine; by HIF1AN). Residue N518 is modified to (3S)-3-hydroxyasparagine; by HIF1AN. ANK repeat units follow at residues 525–554 (RQST…DVHA), 558–587 (GGLV…VVNV), 591–620 (WKFT…DPTK), and 624–652 (DGNT…LLDA). The HIF1AN-binding stretch occupies residues 545-553 (LLQHGADVH). H553 carries the post-translational modification (3S)-3-hydroxyhistidine; by HIF1AN. N586 bears the (3S)-3-hydroxyasparagine; by HIF1AN mark. Residues N671, N706, and N739 each carry the (3S)-3-hydroxyasparagine; by HIF1AN modification. ANK repeat units lie at residues 678-707 (RHST…DVNA), 711-740 (GGLI…CVNA), and 744-773 (WAFT…DPTL). Residues 873–936 (GIDFSITQFI…IKGVERLISG (64 aa)) enclose the SAM domain. The region spanning 959–1164 (SPDDKEFQSV…YQIVRPEGMV (206 aa)) is the PARP catalytic domain. Positions 1081, 1084, 1089, and 1092 each coordinate Zn(2+).

Belongs to the ARTD/PARP family. As to quaternary structure, oligomerizes and associates with TNKS. Interacts with the cytoplasmic domain of LNPEP/Otase in SLC2A4/GLUT4-vesicles. Binds to the N-terminus of Grb14 and TRF1 with its ankyrin repeat region. Interacts with HIF1AN. Interacts with RNF146; this interaction leads to ubiquitination and proteasomal degradation. Interacts with NUMA1. Post-translationally, ubiquitinated by RNF146 when auto-poly-ADP-ribosylated, leading to its degradation. Deubiquitinated by USP25; leading to stabilization. In terms of processing, ADP-ribosylated (-auto). Poly-ADP-ribosylated protein is recognized by RNF146, followed by ubiquitination.

It is found in the cytoplasm. It localises to the golgi apparatus membrane. The protein localises to the nucleus. Its subcellular location is the chromosome. The protein resides in the telomere. The catalysed reaction is NAD(+) + (ADP-D-ribosyl)n-acceptor = nicotinamide + (ADP-D-ribosyl)n+1-acceptor + H(+).. It carries out the reaction L-aspartyl-[protein] + NAD(+) = 4-O-(ADP-D-ribosyl)-L-aspartyl-[protein] + nicotinamide. It catalyses the reaction L-glutamyl-[protein] + NAD(+) = 5-O-(ADP-D-ribosyl)-L-glutamyl-[protein] + nicotinamide. In terms of biological role, poly-ADP-ribosyltransferase involved in various processes such as Wnt signaling pathway, telomere length and vesicle trafficking. Acts as an activator of the Wnt signaling pathway by mediating poly-ADP-ribosylation of AXIN1 and AXIN2, 2 key components of the beta-catenin destruction complex: poly-ADP-ribosylated target proteins are recognized by RNF146, which mediates their ubiquitination and subsequent degradation. Also mediates poly-ADP-ribosylation of BLZF1 and CASC3, followed by recruitment of RNF146 and subsequent ubiquitination. Mediates poly-ADP-ribosylation of TERF1, thereby contributing to the regulation of telomere length. Stimulates 26S proteasome activity. In Mus musculus (Mouse), this protein is Poly [ADP-ribose] polymerase tankyrase-2.